The following is a 386-amino-acid chain: Acetate kinase (386 aa).

Mg(2+) is bound at residue asparagine 7. Residue lysine 14 coordinates ATP. Residue arginine 78 coordinates substrate. Residue aspartate 135 is the Proton donor/acceptor of the active site. ATP is bound by residues 195 to 199, 268 to 270, and 316 to 320; these read HLGNG, DMR, and GIGEN. Residue glutamate 370 coordinates Mg(2+).

This sequence belongs to the acetokinase family. Homodimer. The cofactor is Mg(2+). Mn(2+) is required as a cofactor.

It localises to the cytoplasm. It catalyses the reaction acetate + ATP = acetyl phosphate + ADP. The protein operates within metabolic intermediate biosynthesis; acetyl-CoA biosynthesis; acetyl-CoA from acetate: step 1/2. Its function is as follows. Catalyzes the formation of acetyl phosphate from acetate and ATP. Can also catalyze the reverse reaction. The sequence is that of Acetate kinase from Arthrobacter sp. (strain FB24).